We begin with the raw amino-acid sequence, 217 residues long: Peroxiredoxin Q, chloroplastic (217 aa).

A chloroplast-targeting transit peptide spans 1 to 65; that stretch reads MAAICLPVAK…PPPSYSARIS (65 aa). The Thioredoxin domain occupies 70–217; sequence VSKGSVPPQF…DETLKFLQSA (148 aa). Residue Cys112 is the Cysteine sulfenic acid (-SOH) intermediate of the active site. A disulfide bond links Cys112 and Cys117.

The protein belongs to the peroxiredoxin family. BCP/PrxQ subfamily. In terms of assembly, monomer. As to expression, expressed in the leaves, roots and stems.

Its subcellular location is the plastid. The protein localises to the chloroplast thylakoid lumen. The enzyme catalyses a hydroperoxide + [thioredoxin]-dithiol = an alcohol + [thioredoxin]-disulfide + H2O. Its function is as follows. Thiol-specific peroxidase that catalyzes the reduction of hydrogen peroxide and organic hydroperoxides to water and alcohols, respectively. Plays a role in cell protection against oxidative stress by detoxifying peroxides. Involved in both resistance against fungal disease and oxidative stress. The protein is Peroxiredoxin Q, chloroplastic (AFP1) of Gentiana triflora (Clustered gentian).